Consider the following 153-residue polypeptide: Small ribosomal subunit protein eS19 (153 aa).

Disordered stretches follow at residues 77 to 99 (YGTS…KGSG) and 113 to 139 (GYVE…TAGD). The segment covering 120–133 (NDGRRVTGDGRSLL) has biased composition (basic and acidic residues).

It belongs to the eukaryotic ribosomal protein eS19 family. In terms of assembly, part of the 30S ribosomal subunit.

Functionally, may be involved in maturation of the 30S ribosomal subunit. In Haloarcula marismortui (strain ATCC 43049 / DSM 3752 / JCM 8966 / VKM B-1809) (Halobacterium marismortui), this protein is Small ribosomal subunit protein eS19.